The primary structure comprises 168 residues: MVDEATKRTLAAIPLLKTRAGPRDKDQWVGRLKEELVSLIKYVENNKKQDNDWFRLESNKEGTRWFGKCWYVHNLLKYEFDVEFDIPVTYPGTAPEIALPELDGKTAKMYRGGKICLTDHFKPLWARNVPKFGIAHAMALGLGPWLAVEIPDLVEKGIIVHKEKTSSE.

Cys-116 acts as the Glycyl thioester intermediate in catalysis.

Belongs to the ubiquitin-conjugating enzyme family. UFC1 subfamily.

Functionally, E2-like enzyme which forms an intermediate with UFM1 via a thioester linkage. This is Ubiquitin-fold modifier-conjugating enzyme 1 from Trichoplax adhaerens (Trichoplax reptans).